Consider the following 351-residue polypeptide: tRNA-specific 2-thiouridylase MnmA 2 (351 aa).

Residues Gly-13–Ser-20 and Phe-39 each bind ATP. The Nucleophile role is filled by Cys-98. A disulfide bond links Cys-98 and Cys-195. Position 122 (Gly-122) interacts with ATP. The interaction with tRNA stretch occupies residues Lys-144–Gln-146. The active-site Cysteine persulfide intermediate is Cys-195. Residues Arg-301–Tyr-302 form an interaction with tRNA region.

Belongs to the MnmA/TRMU family.

It is found in the cytoplasm. It carries out the reaction S-sulfanyl-L-cysteinyl-[protein] + uridine(34) in tRNA + AH2 + ATP = 2-thiouridine(34) in tRNA + L-cysteinyl-[protein] + A + AMP + diphosphate + H(+). Catalyzes the 2-thiolation of uridine at the wobble position (U34) of tRNA, leading to the formation of s(2)U34. In Phocaeicola vulgatus (strain ATCC 8482 / DSM 1447 / JCM 5826 / CCUG 4940 / NBRC 14291 / NCTC 11154) (Bacteroides vulgatus), this protein is tRNA-specific 2-thiouridylase MnmA 2.